The chain runs to 214 residues: Peptide methionine sulfoxide reductase B1, chloroplastic (214 aa).

The transit peptide at 1–53 (MAMRQYAAATAASSSFRARPRARPSCLPAAALPLAPCCGVAWSRASYRRASVR) directs the protein to the chloroplast. The span at 58 to 81 (ASSSSSSSSSSPSPQGQAQAQAQG) shows a compositional bias: low complexity. Positions 58–91 (ASSSSSSSSSSPSPQGQAQAQAQGKPNYSTSLTD) are disordered. Residues 91–213 (DEEWRKRLTK…NSASLKLKKT (123 aa)) enclose the MsrB domain. Zn(2+)-binding residues include cysteine 130, cysteine 133, cysteine 179, and cysteine 182. Cysteine 202 serves as the catalytic Nucleophile.

This sequence belongs to the MsrB Met sulfoxide reductase family. The cofactor is Zn(2+). In terms of tissue distribution, expressed in leaves and flowers.

The protein localises to the plastid. It is found in the chloroplast. It carries out the reaction L-methionyl-[protein] + [thioredoxin]-disulfide + H2O = L-methionyl-(R)-S-oxide-[protein] + [thioredoxin]-dithiol. Its function is as follows. Catalyzes the reduction of methionine sulfoxide (MetSO) to methionine in proteins. Involved in abiotic stress response. Plays a protective role against oxidative stress by restoring activity to proteins that have been inactivated by methionine oxidation. MSRB family specifically reduces the MetSO R-enantiomer. This is Peptide methionine sulfoxide reductase B1, chloroplastic from Oryza sativa subsp. japonica (Rice).